Here is a 461-residue protein sequence, read N- to C-terminus: MNKLKKIQMKETDYYFGNDIAQLNLPGLKKYTNGRRLVEDQGISNKHYMFVRHDGDSWIKSSDKSCKFDKIIIKADYVEKHIFPKKMKPNKDDDEEEDEDDEDDEDDEEEDNEEEDNEEENEITIAPGIIKLSKKEKMKDNSGNIIEIEVRGTRDHDNCYFRVSDVSVGFGMKKLHDTITKKGGYEENNHYRYFYIDKNPTNSGKSKKVKSKKPLPKKLFLTYLGLLKVLFVSRNKTVGNFLNWATETLFTAHLGTQDQKNELSSKLMGISANIVKEVFSTTSSTLPTIYLFSIGKVKDLRATLKIDKEYNDNDIVCKVGETIDLTRRINEHNATYGKLPGANLCLKWYNYIDPQHTSKAETELLMLLDKLGHKLDHPKYDELIIFPKDKKAGKFIIDQFKNVSNKYIGHVKVLVDKIKELENEIKELKYQNEINELKYKNIILEKDLEISNLNKKLKKKK.

Residues 86–127 (KMKPNKDDDEEEDEDDEDDEDDEEEDNEEEDNEEENEITIAP) form a disordered region. Over residues 92-122 (DDDEEEDEDDEDDEDDEEEDNEEEDNEEENE) the composition is skewed to acidic residues. 2 coiled-coil regions span residues 95–123 (EEED…ENEI) and 405–459 (NKYI…KLKK).

This sequence belongs to the mimivirus L5 family.

This is an uncharacterized protein from Acanthamoeba polyphaga mimivirus (APMV).